Consider the following 283-residue polypeptide: Type III pantothenate kinase (283 aa).

9–16 (DIGNTRLK) lines the ATP pocket. Substrate is bound by residues Tyr-116 and 123–126 (GVDR). Asp-125 functions as the Proton acceptor in the catalytic mechanism. ATP is bound at residue Thr-149. Position 211 (Thr-211) interacts with substrate.

This sequence belongs to the type III pantothenate kinase family. As to quaternary structure, homodimer. NH4(+) serves as cofactor. The cofactor is K(+).

It localises to the cytoplasm. The enzyme catalyses (R)-pantothenate + ATP = (R)-4'-phosphopantothenate + ADP + H(+). It participates in cofactor biosynthesis; coenzyme A biosynthesis; CoA from (R)-pantothenate: step 1/5. In terms of biological role, catalyzes the phosphorylation of pantothenate (Pan), the first step in CoA biosynthesis. The protein is Type III pantothenate kinase of Cupriavidus taiwanensis (strain DSM 17343 / BCRC 17206 / CCUG 44338 / CIP 107171 / LMG 19424 / R1) (Ralstonia taiwanensis (strain LMG 19424)).